A 657-amino-acid polypeptide reads, in one-letter code: Splicing factor Cactin (657 aa).

Over residues 1–15 (MGKDSKKHKKERRRE) the composition is skewed to basic residues. Disordered stretches follow at residues 1-83 (MGKD…EDTL), 369-406 (QESEELLPVAEVPPQVKIQKEEEEEEEEDEDDEKISKK), and 472-503 (ADVDNLTERRNRNRGTLPSSSAASSGAPQGAS). Coiled coils occupy residues 23–77 (SDEE…RKDA) and 352–403 (RLQL…DEKI). Basic and acidic residues predominate over residues 26–60 (ERLQKRLAEQRSLKKDEKRRQKEEMKKNESAEEKR). Residues 61–72 (ARRMEKKMRKDA) show a composition bias toward basic residues. The span at 389-401 (EEEEEEEEDEDDE) shows a compositional bias: acidic residues. The span at 489-503 (PSSSAASSGAPQGAS) shows a compositional bias: low complexity.

Belongs to the CACTIN family. In terms of tissue distribution, expressed in pharynx, intestine, vulva and spermatheca (at protein level).

It localises to the nucleus. The protein localises to the cytoplasm. In terms of biological role, plays a role in pre-mRNA splicing by facilitating excision of a subset of introns. Plays a role during early embryonic development. Required for the distal tip cell migration at the end of larval development and for gonad morphogenesis. This Caenorhabditis elegans protein is Splicing factor Cactin (cacn-1).